Reading from the N-terminus, the 520-residue chain is Cytochrome P450 4F2 (520 aa).

A propeptide spanning residues 1 to 4 (MSQL) is cleaved from the precursor. Positions 328 and 468 each coordinate heme.

The protein belongs to the cytochrome P450 family. Heme is required as a cofactor. As to expression, liver. Also present in kidney: specifically expressed in the S2 and S3 segments of proximal tubules in cortex and outer medulla.

The protein localises to the microsome membrane. It localises to the endoplasmic reticulum membrane. The enzyme catalyses an organic molecule + reduced [NADPH--hemoprotein reductase] + O2 = an alcohol + oxidized [NADPH--hemoprotein reductase] + H2O + H(+). It carries out the reaction (5Z,8Z,11Z,14Z)-eicosatetraenoate + reduced [NADPH--hemoprotein reductase] + O2 = 20-hydroxy-(5Z,8Z,11Z,14Z)-eicosatetraenoate + oxidized [NADPH--hemoprotein reductase] + H2O + H(+). The catalysed reaction is (5Z,8Z,11Z)-eicosatrienoate + reduced [NADPH--hemoprotein reductase] + O2 = 20-hydroxy-(5Z,8Z,11Z)-eicosatrienoate + oxidized [NADPH--hemoprotein reductase] + H2O + H(+). It catalyses the reaction (5Z,8Z,11Z,14Z,17Z)-eicosapentaenoate + reduced [NADPH--hemoprotein reductase] + O2 = 20-hydroxy-(5Z,8Z,11Z,14Z,17Z)-eicosapentaenoate + oxidized [NADPH--hemoprotein reductase] + H2O + H(+). The enzyme catalyses (4Z,7Z,10Z,13Z,16Z,19Z)-docosahexaenoate + reduced [NADPH--hemoprotein reductase] + O2 = 22-hydroxy-(4Z,7Z,10Z,13Z,16Z,19Z)-docosahexaenoate + oxidized [NADPH--hemoprotein reductase] + H2O + H(+). It carries out the reaction 8,9-epoxy-(5Z,11Z,14Z)-eicosatrienoate + reduced [NADPH--hemoprotein reductase] + O2 = 20-hydroxy-8,9-epoxy-(5Z,11Z,14Z)-eicosatrienoate + oxidized [NADPH--hemoprotein reductase] + H2O + H(+). The catalysed reaction is (9S,10R)-epoxy-octadecanoate + reduced [NADPH--hemoprotein reductase] + O2 = 18-hydroxy-(9S,10R)-epoxy-octadecanoate + oxidized [NADPH--hemoprotein reductase] + H2O + H(+). It catalyses the reaction (9R,10S)-epoxy-octadecanoate + reduced [NADPH--hemoprotein reductase] + O2 = 18-hydroxy-(9R,10S)-epoxy-octadecanoate + oxidized [NADPH--hemoprotein reductase] + H2O + H(+). The enzyme catalyses 12,13-epoxy-(9Z)-octadecenoate + reduced [NADPH--hemoprotein reductase] + O2 = 18-hydroxy-12,13-epoxy-(9Z)-octadecenoate + oxidized [NADPH--hemoprotein reductase] + H2O + H(+). It carries out the reaction 9,10-epoxy-(12Z)-octadecenoate + reduced [NADPH--hemoprotein reductase] + O2 = 18-hydroxy-9,10-epoxy-(12Z)-octadecenoate + oxidized [NADPH--hemoprotein reductase] + H2O + H(+). The catalysed reaction is 8-hydroxy-(5Z,9E,11Z,14Z)-eicosatetraenoate + reduced [NADPH--hemoprotein reductase] + O2 = 8,20-dihydroxy-(5Z,9E,11Z,14Z)-eicosatetraenoate + oxidized [NADPH--hemoprotein reductase] + H2O + H(+). It catalyses the reaction 12-hydroxy-(5Z,8Z,10E,14Z)-eicosatetraenoate + reduced [NADPH--hemoprotein reductase] + O2 = 12,20-dihydroxy-(5Z,8Z,10E,14Z)-eicosatetraenoate + oxidized [NADPH--hemoprotein reductase] + H2O + H(+). The enzyme catalyses 12-hydroxyoctadecanoate + reduced [NADPH--hemoprotein reductase] + O2 = 12,18-dihydroxyoctadecanoate + oxidized [NADPH--hemoprotein reductase] + H2O + H(+). It carries out the reaction docosanoate + reduced [NADPH--hemoprotein reductase] + O2 = 22-hydroxydocosanoate + oxidized [NADPH--hemoprotein reductase] + H2O + H(+). The catalysed reaction is 22-hydroxydocosanoate + reduced [NADPH--hemoprotein reductase] + O2 = 22-oxodocosanoate + oxidized [NADPH--hemoprotein reductase] + 2 H2O + H(+). It catalyses the reaction 22-oxodocosanoate + reduced [NADPH--hemoprotein reductase] + O2 = docosanedioate + oxidized [NADPH--hemoprotein reductase] + H2O + 2 H(+). The enzyme catalyses tetracosanoate + reduced [NADPH--hemoprotein reductase] + O2 = 24-hydroxytetracosanoate + oxidized [NADPH--hemoprotein reductase] + H2O + H(+). It carries out the reaction hexacosanoate + reduced [NADPH--hemoprotein reductase] + O2 = 26-hydroxyhexacosanoate + oxidized [NADPH--hemoprotein reductase] + H2O + H(+). The catalysed reaction is 26-hydroxyhexacosanoate + reduced [NADPH--hemoprotein reductase] + O2 = 26-oxohexacosanoate + oxidized [NADPH--hemoprotein reductase] + 2 H2O + H(+). It catalyses the reaction 26-oxohexacosanoate + reduced [NADPH--hemoprotein reductase] + O2 = hexacosanedioate + oxidized [NADPH--hemoprotein reductase] + H2O + 2 H(+). The enzyme catalyses 3-hydroxyoctadecanoate + reduced [NADPH--hemoprotein reductase] + O2 = 3,18-dihydroxyoctadecanoate + oxidized [NADPH--hemoprotein reductase] + H2O + H(+). It carries out the reaction 3-hydroxyhexadecanoate + reduced [NADPH--hemoprotein reductase] + O2 = 3,16-dihydroxyhexadecanoate + oxidized [NADPH--hemoprotein reductase] + H2O + H(+). The catalysed reaction is leukotriene B4 + reduced [NADPH--hemoprotein reductase] + O2 = 20-hydroxy-leukotriene B4 + oxidized [NADPH--hemoprotein reductase] + H2O + H(+). It catalyses the reaction 6-trans-leukotriene B4 + reduced [NADPH--hemoprotein reductase] + O2 = 20-hydroxy-6-trans-leukotriene B4 + oxidized [NADPH--hemoprotein reductase] + H2O + H(+). The enzyme catalyses lipoxin A4 + reduced [NADPH--hemoprotein reductase] + O2 = 20-hydroxy-lipoxin A4 + oxidized [NADPH--hemoprotein reductase] + H2O + H(+). It carries out the reaction menaquinone-4 + reduced [NADPH--hemoprotein reductase] + O2 = omega-hydroxymenaquinone-4 + oxidized [NADPH--hemoprotein reductase] + H2O + H(+). The catalysed reaction is phylloquinone + reduced [NADPH--hemoprotein reductase] + O2 = omega-hydroxyphylloquinone + oxidized [NADPH--hemoprotein reductase] + H2O + H(+). It catalyses the reaction (+)-alpha-tocopherol + reduced [NADPH--hemoprotein reductase] + O2 = 13-hydroxy-alpha-tocopherol + oxidized [NADPH--hemoprotein reductase] + H2O + H(+). The enzyme catalyses gamma-tocopherol + NADPH + O2 + H(+) = 13-hydroxy-gamma-tocopherol + NADP(+) + H2O. Its pathway is lipid metabolism; arachidonate metabolism. It participates in lipid metabolism; leukotriene B4 degradation. It functions in the pathway cofactor degradation; phylloquinone degradation. With respect to regulation, inhibited by dietary sesamin. In terms of biological role, a cytochrome P450 monooxygenase involved in the metabolism of various endogenous substrates, including fatty acids, eicosanoids and vitamins. Mechanistically, uses molecular oxygen inserting one oxygen atom into a substrate, and reducing the second into a water molecule, with two electrons provided by NADPH via cytochrome P450 reductase (CPR; NADPH-ferrihemoprotein reductase). Catalyzes predominantly the oxidation of the terminal carbon (omega-oxidation) of long- and very long-chain fatty acids. Displays high omega-hydroxylase activity toward polyunsaturated fatty acids (PUFAs). Participates in the conversion of arachidonic acid to omega-hydroxyeicosatetraenoic acid (20-HETE), a signaling molecule acting both as vasoconstrictive and natriuretic with overall effect on arterial blood pressure. Plays a role in the oxidative inactivation of eicosanoids, including both pro-inflammatory and anti-inflammatory mediators such as leukotriene B4 (LTB4), lipoxin A4 (LXA4), and several HETEs. Catalyzes omega-hydroxylation of 3-hydroxy fatty acids. Converts monoepoxides of linoleic acid leukotoxin and isoleukotoxin to omega-hydroxylated metabolites. Contributes to the degradation of very long-chain fatty acids (VLCFAs) by catalyzing successive omega-oxidations and chain shortening. Plays an important role in vitamin metabolism by chain shortening. Catalyzes omega-hydroxylation of the phytyl chain of tocopherols (forms of vitamin E), with preference for gamma-tocopherols over alpha-tocopherols, thus promoting retention of alpha-tocopherols in tissues. Omega-hydroxylates and inactivates phylloquinone (vitamin K1), and menaquinone-4 (MK-4, a form of vitamin K2), both acting as cofactors in blood coagulation. The protein is Cytochrome P450 4F2 of Homo sapiens (Human).